A 299-amino-acid chain; its full sequence is Nucleotide-binding protein AFE_3021 (299 aa).

ATP is bound at residue 11 to 18; the sequence is GLSGSGKS. 62–65 contacts GTP; it reads DVRN.

Belongs to the RapZ-like family.

Its function is as follows. Displays ATPase and GTPase activities. This Acidithiobacillus ferrooxidans (strain ATCC 23270 / DSM 14882 / CIP 104768 / NCIMB 8455) (Ferrobacillus ferrooxidans (strain ATCC 23270)) protein is Nucleotide-binding protein AFE_3021.